Here is an 863-residue protein sequence, read N- to C-terminus: MICAL-like protein 1 (863 aa).

A Calponin-homology (CH) domain is found at 2–108 (AGPRGALLAW…YVSQYYNHFC (107 aa)). Disordered stretches follow at residues 119–162 (RKGL…TPSS) and 224–670 (GTRS…PLIK). Residues 125–135 (CSPPSVAPTPV) show a composition bias toward pro residues. Low complexity-rich tracts occupy residues 143–159 (GEEL…TGQT) and 224–244 (GTRS…HQQQ). The LIM zinc-binding domain maps to 162 to 225 (STCAACQQHV…EHCARLGPGT (64 aa)). Residues Ser295 and Ser309 each carry the phosphoserine modification. A Phosphothreonine modification is found at Thr318. Positions 325–340 (LQQENLVEQAGSSSLV) are enriched in polar residues. Residues 384–395 (APLPPSSSPGPP) show a composition bias toward pro residues. Ser391 is modified (phosphoserine). The NPF1 signature appears at 425–427 (NPF). Residues 427–438 (FEEEEEDKEEEA) are compositionally biased toward acidic residues. The segment covering 439–450 (PAAPSLATSPAL) has biased composition (low complexity). A phosphothreonine mark is found at Thr467 and Thr469. A phosphoserine mark is found at Ser470, Ser471, Ser484, and Ser486. 3 stretches are compositionally biased toward low complexity: residues 482-495 (APSA…ASRL), 505-520 (PSPA…ESAS), and 553-566 (SLST…SGEL). Phosphoserine occurs at positions 578 and 621. An NPF2 motif is present at residues 633–635 (NPF). Over residues 638–656 (KPSPAASPATKKATKGSKP) the composition is skewed to low complexity. A mediates the interaction with RAB13 and RAB35 and intramolecular interaction with the CH domain region spans residues 652-863 (KGSKPVRPPA…AKSKSPRDKS (212 aa)). The 148-residue stretch at 671–818 (RKVQADQYIP…EEEEDKMLEA (148 aa)) folds into the bMERB domain. A coiled-coil region spans residues 682–711 (EDIHGEMDTIERRLDALEHRGVLLEEKLRG). Positions 700 to 863 (HRGVLLEEKL…AKSKSPRDKS (164 aa)) are necessary and sufficient to associate with tubular recycling endosome membranes, mediate phosphatidic acid-binding and membrane tubulation. Ser740 is modified (phosphoserine). Residues 785–830 (MQELVTLIEQRNAIINCLDEDRQREEEEDKMLEAMIKKKEFQREAE) are a coiled coil.

As to quaternary structure, homooligomer. Interacts (via NPF1 motif) with EHD1 (via EH domain); the interaction is direct and probably recruits EHD1 to membranes. Interacts with EHD3 (via EH domain). Interacts with RAB35 (GTP-bound form); the interaction is direct and probably recruits MICALL1 to membranes. Interacts with ACAP2; the interaction is indirect through RAB35. Interacts with RAB8A (GTP-bound form); regulates RAB8A association with recycling endosomes. Interacts with RAB13 (GTP-bound form). Interacts with ARF6 (GTP-bound form). Interacts with PACSIN2 (via the SH3 domain). Interacts with DPYSL2.

The protein resides in the recycling endosome membrane. The protein localises to the late endosome membrane. It localises to the cell projection. It is found in the cilium membrane. Its subcellular location is the cytoplasm. The protein resides in the cytoskeleton. The protein localises to the microtubule organizing center. It localises to the centrosome. It is found in the centriole. Functionally, lipid-binding protein with higher affinity for phosphatidic acid, a lipid enriched in recycling endosome membranes. On endosome membranes, acts as a downstream effector of Rab proteins recruiting cytosolic proteins to regulate membrane tubulation. Involved in a late step of receptor-mediated endocytosis regulating for instance endocytosed-EGF receptor trafficking. Alternatively, regulates slow endocytic recycling of endocytosed proteins back to the plasma membrane. Also involved in cargo protein delivery to the plasma membrane. Plays a role in ciliogenesis coordination, recruits EHD1 to primary cilium where it is anchored to the centriole through interaction with tubulins. May indirectly play a role in neurite outgrowth. The chain is MICAL-like protein 1 (MICALL1) from Homo sapiens (Human).